The following is a 332-amino-acid chain: tRNA dimethylallyltransferase (332 aa).

30 to 37 (GPTAVGKT) lines the ATP pocket. Position 32 to 37 (32 to 37 (TAVGKT)) interacts with substrate. Residues 57–60 (DSMQ) are interaction with substrate tRNA.

The protein belongs to the IPP transferase family. As to quaternary structure, monomer. Mg(2+) serves as cofactor.

The catalysed reaction is adenosine(37) in tRNA + dimethylallyl diphosphate = N(6)-dimethylallyladenosine(37) in tRNA + diphosphate. In terms of biological role, catalyzes the transfer of a dimethylallyl group onto the adenine at position 37 in tRNAs that read codons beginning with uridine, leading to the formation of N6-(dimethylallyl)adenosine (i(6)A). This Natranaerobius thermophilus (strain ATCC BAA-1301 / DSM 18059 / JW/NM-WN-LF) protein is tRNA dimethylallyltransferase.